The primary structure comprises 98 residues: Cystatin-A (98 aa).

At M1 the chain carries N-acetylmethionine. Positions 46 to 50 (QVVAG) match the Secondary area of contact motif.

This sequence belongs to the cystatin family.

The protein resides in the cytoplasm. In terms of biological role, this is an intracellular thiol proteinase inhibitor. This chain is Cystatin-A (CSTA), found in Felis catus (Cat).